The following is a 245-amino-acid chain: Probable transcriptional regulatory protein Ddes_0536 (245 aa).

Positions Met-1–Arg-21 are disordered.

The protein belongs to the TACO1 family.

It localises to the cytoplasm. The chain is Probable transcriptional regulatory protein Ddes_0536 from Desulfovibrio desulfuricans (strain ATCC 27774 / DSM 6949 / MB).